A 71-amino-acid chain; its full sequence is UPF0346 protein MGAS2096_Spy0401 (71 aa).

Belongs to the UPF0346 family.

The chain is UPF0346 protein MGAS2096_Spy0401 from Streptococcus pyogenes serotype M12 (strain MGAS2096).